The primary structure comprises 156 residues: Small ribosomal subunit protein uS7 (156 aa).

It belongs to the universal ribosomal protein uS7 family. As to quaternary structure, part of the 30S ribosomal subunit. Contacts proteins S9 and S11.

Its function is as follows. One of the primary rRNA binding proteins, it binds directly to 16S rRNA where it nucleates assembly of the head domain of the 30S subunit. Is located at the subunit interface close to the decoding center, probably blocks exit of the E-site tRNA. This chain is Small ribosomal subunit protein uS7, found in Methylorubrum extorquens (strain CM4 / NCIMB 13688) (Methylobacterium extorquens).